The sequence spans 443 residues: Aspartic protease PEP3 (443 aa).

Positions 1 to 36 are cleaved as a signal peptide; sequence MQNRPRVFDSAMNLSPNMHFLSLMPGLLLLSLQVHT. The propeptide at 37-107 is activation peptide; the sequence is SPTPLKKTIR…NTVSKAMQAN (71 aa). The region spanning 123 to 440 is the Peptidase A1 domain; it reads YLSPVTIGGQ…DLRGPSLHVA (318 aa). Aspartate 139 is an active-site residue. 2 N-linked (GlcNAc...) asparagine glycosylation sites follow: asparagine 180 and asparagine 293. The active site involves aspartate 327. Cysteine 363 and cysteine 403 form a disulfide bridge. Residues asparagine 364 and asparagine 388 are each glycosylated (N-linked (GlcNAc...) asparagine).

This sequence belongs to the peptidase A1 family. Monomer.

The protein resides in the secreted. Its function is as follows. Secreted aspartic endopeptidase that allows assimilation of proteinaceous substrates. The scissile peptide bond is attacked by a nucleophilic water molecule activated by two aspartic residues in the active site. Shows a broad primary substrate specificity. Favors hydrophobic residues at the P1 and P1' positions. In Coccidioides posadasii (strain C735) (Valley fever fungus), this protein is Aspartic protease PEP3.